The chain runs to 337 residues: uncharacterized protein (337 aa).

Residues 12–60 (SLNYVDLPDTVHRKIFEYLNPWEIFKLSRISKAIHVTILKNKKFAVKDI) form the F-box domain.

This is an uncharacterized protein from Caenorhabditis elegans.